The sequence spans 145 residues: Protein SprT-like (145 aa).

Residues 4-140 (TNYVQEVSLA…VCGNCHGKLM (137 aa)) form the SprT-like domain. His-64 contributes to the Zn(2+) binding site. Residue Glu-65 is part of the active site. His-68 provides a ligand contact to Zn(2+).

The protein belongs to the SprT family. Zn(2+) is required as a cofactor.

It localises to the cytoplasm. This Streptococcus pyogenes serotype M1 protein is Protein SprT-like.